Consider the following 447-residue polypeptide: tRNA-2-methylthio-N(6)-dimethylallyladenosine synthase (447 aa).

Residues 10 to 128 (KLFCISTYGC…FPEYLHRVLQ (119 aa)) enclose the MTTase N-terminal domain. [4Fe-4S] cluster-binding residues include Cys-19, Cys-55, Cys-89, Cys-165, Cys-169, and Cys-172. The 232-residue stretch at 151–382 (RKSDVKAFVT…EAINKKVVIK (232 aa)) folds into the Radical SAM core domain. Positions 384–447 (KEYEGKVVEV…PFSLIGEIVE (64 aa)) constitute a TRAM domain.

It belongs to the methylthiotransferase family. MiaB subfamily. Monomer. [4Fe-4S] cluster is required as a cofactor.

It is found in the cytoplasm. It carries out the reaction N(6)-dimethylallyladenosine(37) in tRNA + (sulfur carrier)-SH + AH2 + 2 S-adenosyl-L-methionine = 2-methylsulfanyl-N(6)-dimethylallyladenosine(37) in tRNA + (sulfur carrier)-H + 5'-deoxyadenosine + L-methionine + A + S-adenosyl-L-homocysteine + 2 H(+). Its function is as follows. Catalyzes the methylthiolation of N6-(dimethylallyl)adenosine (i(6)A), leading to the formation of 2-methylthio-N6-(dimethylallyl)adenosine (ms(2)i(6)A) at position 37 in tRNAs that read codons beginning with uridine. The polypeptide is tRNA-2-methylthio-N(6)-dimethylallyladenosine synthase (Clostridium perfringens (strain SM101 / Type A)).